Consider the following 154-residue polypeptide: AP-1 complex subunit sigma-3 (154 aa).

This sequence belongs to the adaptor complexes small subunit family. In terms of assembly, adaptor protein complex 1 (AP-1) is a heterotetramer composed of two large adaptins (gamma-type subunit AP1G1 and beta-type subunit AP1B1), a medium adaptin (mu-type subunit AP1M1 or AP1M2) and a small adaptin (sigma-type subunit AP1S1 or AP1S2 or AP1S3).

The protein localises to the golgi apparatus. Its subcellular location is the cytoplasmic vesicle membrane. It localises to the membrane. It is found in the clathrin-coated pit. Functionally, subunit of clathrin-associated adaptor protein complex 1 that plays a role in protein sorting in the late-Golgi/trans-Golgi network (TGN) and/or endosomes. The AP complexes mediate both the recruitment of clathrin to membranes and the recognition of sorting signals within the cytosolic tails of transmembrane cargo molecules. Involved in TLR3 trafficking. This is AP-1 complex subunit sigma-3 (Ap1s3) from Mus musculus (Mouse).